The primary structure comprises 190 residues: Heme-binding protein 1 (190 aa).

It belongs to the HEBP family. Monomer.

Its subcellular location is the cytoplasm. Its function is as follows. May bind free porphyrinogens that may be present in the cell and thus facilitate removal of these potentially toxic compound. Binds with a high affinity to one molecule of heme or porphyrins. It binds metalloporphyrins, free porphyrins and N-methylprotoporphyrin with similar affinities. This chain is Heme-binding protein 1 (hebp1), found in Xenopus laevis (African clawed frog).